Here is a 384-residue protein sequence, read N- to C-terminus: Cell division protein FtsZ (384 aa).

GTP contacts are provided by residues 20–24 (GGGSN), 107–109 (GTG), glutamate 138, arginine 142, and asparagine 186.

It belongs to the FtsZ family. In terms of assembly, homodimer. Polymerizes to form a dynamic ring structure in a strictly GTP-dependent manner. Interacts directly with several other division proteins.

The protein localises to the cytoplasm. Essential cell division protein that forms a contractile ring structure (Z ring) at the future cell division site. The regulation of the ring assembly controls the timing and the location of cell division. One of the functions of the FtsZ ring is to recruit other cell division proteins to the septum to produce a new cell wall between the dividing cells. Binds GTP and shows GTPase activity. The chain is Cell division protein FtsZ from Buchnera aphidicola subsp. Acyrthosiphon pisum (strain APS) (Acyrthosiphon pisum symbiotic bacterium).